The following is a 168-amino-acid chain: G/U mismatch-specific DNA glycosylase (168 aa).

It belongs to the uracil-DNA glycosylase (UDG) superfamily. TDG/mug family. Binds DNA as a monomer.

Its subcellular location is the cytoplasm. The enzyme catalyses Specifically hydrolyzes mismatched double-stranded DNA and polynucleotides, releasing free uracil.. Functionally, excises ethenocytosine and uracil, which can arise by alkylation or deamination of cytosine, respectively, from the corresponding mispairs with guanine in ds-DNA. It is capable of hydrolyzing the carbon-nitrogen bond between the sugar-phosphate backbone of the DNA and the mispaired base. The complementary strand guanine functions in substrate recognition. Required for DNA damage lesion repair in stationary-phase cells. In Salmonella gallinarum (strain 287/91 / NCTC 13346), this protein is G/U mismatch-specific DNA glycosylase.